Reading from the N-terminus, the 331-residue chain is RNA 3'-terminal phosphate cyclase (331 aa).

ATP is bound by residues Gln100 and 276-280 (HLADQ). His301 acts as the Tele-AMP-histidine intermediate in catalysis.

The protein belongs to the RNA 3'-terminal cyclase family. Type 1 subfamily.

It localises to the cytoplasm. The enzyme catalyses a 3'-end 3'-phospho-ribonucleotide-RNA + ATP = a 3'-end 2',3'-cyclophospho-ribonucleotide-RNA + AMP + diphosphate. Functionally, catalyzes the conversion of 3'-phosphate to a 2',3'-cyclic phosphodiester at the end of RNA. The mechanism of action of the enzyme occurs in 3 steps: (A) adenylation of the enzyme by ATP; (B) transfer of adenylate to an RNA-N3'P to produce RNA-N3'PP5'A; (C) and attack of the adjacent 2'-hydroxyl on the 3'-phosphorus in the diester linkage to produce the cyclic end product. The biological role of this enzyme is unknown but it is likely to function in some aspects of cellular RNA processing. The sequence is that of RNA 3'-terminal phosphate cyclase from Methanococcoides burtonii (strain DSM 6242 / NBRC 107633 / OCM 468 / ACE-M).